Consider the following 473-residue polypeptide: Siroheme synthase (473 aa).

The tract at residues 1–206 (MDYLPIFMKI…GNTGEAEALL (206 aa)) is precorrin-2 dehydrogenase /sirohydrochlorin ferrochelatase. Residues 22-23 (TV) and 43-44 (PK) each bind NAD(+). Residues 223-473 (GEVYIIGAGP…KSLLDDRVPA (251 aa)) are uroporphyrinogen-III C-methyltransferase. Residue proline 232 coordinates S-adenosyl-L-methionine. Catalysis depends on aspartate 255, which acts as the Proton acceptor. The Proton donor role is filled by lysine 277. Residues 308-310 (GGD), isoleucine 313, 338-339 (TA), methionine 390, and glycine 419 each bind S-adenosyl-L-methionine.

This sequence in the N-terminal section; belongs to the precorrin-2 dehydrogenase / sirohydrochlorin ferrochelatase family. In the C-terminal section; belongs to the precorrin methyltransferase family.

It catalyses the reaction uroporphyrinogen III + 2 S-adenosyl-L-methionine = precorrin-2 + 2 S-adenosyl-L-homocysteine + H(+). The enzyme catalyses precorrin-2 + NAD(+) = sirohydrochlorin + NADH + 2 H(+). The catalysed reaction is siroheme + 2 H(+) = sirohydrochlorin + Fe(2+). The protein operates within cofactor biosynthesis; adenosylcobalamin biosynthesis; precorrin-2 from uroporphyrinogen III: step 1/1. It functions in the pathway cofactor biosynthesis; adenosylcobalamin biosynthesis; sirohydrochlorin from precorrin-2: step 1/1. Its pathway is porphyrin-containing compound metabolism; siroheme biosynthesis; precorrin-2 from uroporphyrinogen III: step 1/1. It participates in porphyrin-containing compound metabolism; siroheme biosynthesis; siroheme from sirohydrochlorin: step 1/1. The protein operates within porphyrin-containing compound metabolism; siroheme biosynthesis; sirohydrochlorin from precorrin-2: step 1/1. Multifunctional enzyme that catalyzes the SAM-dependent methylations of uroporphyrinogen III at position C-2 and C-7 to form precorrin-2 via precorrin-1. Then it catalyzes the NAD-dependent ring dehydrogenation of precorrin-2 to yield sirohydrochlorin. Finally, it catalyzes the ferrochelation of sirohydrochlorin to yield siroheme. In Hydrogenovibrio crunogenus (strain DSM 25203 / XCL-2) (Thiomicrospira crunogena), this protein is Siroheme synthase.